A 434-amino-acid polypeptide reads, in one-letter code: Serine hydroxymethyltransferase (434 aa).

(6S)-5,6,7,8-tetrahydrofolate is bound by residues Leu133 and 137-139 (GHL). Lys242 carries the N6-(pyridoxal phosphate)lysine modification.

This sequence belongs to the SHMT family. Homodimer. The cofactor is pyridoxal 5'-phosphate.

The protein resides in the cytoplasm. The enzyme catalyses (6R)-5,10-methylene-5,6,7,8-tetrahydrofolate + glycine + H2O = (6S)-5,6,7,8-tetrahydrofolate + L-serine. It functions in the pathway one-carbon metabolism; tetrahydrofolate interconversion. It participates in amino-acid biosynthesis; glycine biosynthesis; glycine from L-serine: step 1/1. Catalyzes the reversible interconversion of serine and glycine with tetrahydrofolate (THF) serving as the one-carbon carrier. This reaction serves as the major source of one-carbon groups required for the biosynthesis of purines, thymidylate, methionine, and other important biomolecules. Also exhibits THF-independent aldolase activity toward beta-hydroxyamino acids, producing glycine and aldehydes, via a retro-aldol mechanism. This is Serine hydroxymethyltransferase from Caulobacter sp. (strain K31).